A 107-amino-acid polypeptide reads, in one-letter code: Universal stress protein B homolog (107 aa).

Helical transmembrane passes span 6–26 (TILF…LTAL) and 86–106 (VREL…AAFI).

It belongs to the universal stress protein B family.

It is found in the cell inner membrane. This is Universal stress protein B homolog from Vibrio parahaemolyticus serotype O3:K6 (strain RIMD 2210633).